Consider the following 511-residue polypeptide: Cytochrome P450 4B1 (511 aa).

Heme contacts are provided by E315 and C453.

It belongs to the cytochrome P450 family. Requires heme as cofactor.

Its subcellular location is the endoplasmic reticulum membrane. It is found in the microsome membrane. The enzyme catalyses an organic molecule + reduced [NADPH--hemoprotein reductase] + O2 = an alcohol + oxidized [NADPH--hemoprotein reductase] + H2O + H(+). Functionally, cytochromes P450 are a group of heme-thiolate monooxygenases. In liver microsomes, this enzyme is involved in an NADPH-dependent electron transport pathway. It oxidizes a variety of structurally unrelated compounds, including steroids, fatty acids, and xenobiotics. This is Cytochrome P450 4B1 (Cyp4b1) from Rattus norvegicus (Rat).